We begin with the raw amino-acid sequence, 938 residues long: MHLEHLMSSTTAVSWSKIGLIAYGDAQSQDGNLCITFLETVNGSNWRFHPPKKYVIHPQLHEDQSSNGNPKSPLFFHDLRSMHWNNWGLLNGELLAVCDELGNMTVLAAGQGLNGNGAYDRLSVLFQDNIFKIHNQVLPLESVPKKDATPKVERKHTKKEYYSTILDFQWIGNQKPSVAQVAAQRDRTNNIFKNQMHQCPPYGVFHPASIKSACIAIRRNGYIDLWYQFSNTLDFKKISLQLSKDKESEWLQYAQIAHTDKEQCFLIGVFSNVAKSFAFYELLINWNVNTTNQAMFHDPKLTLRHILRVRPDALGPNGELLKLENFHVISKTALPGTRPEILISYNILGTERSLVRRFQMVLSNPDMVFLSSLGLAITALHNNHSVLRYSMKHVQDLTFDSKIMDIQSHSLDALVCFRLHNGRFQLYNRHTWAVESETADAKQIGGYTKDTIISIFGSGFNYPLLPPADAIEWCAISPSSGGIILKLKCKPQPTFYALEQSVLTDPSRDIVHATAFAFEFVRFNNMIHSGEDLAIAAKTHVFRLQRLSEERAVNFIASVIGAILSLYGIHFDGPKEILEKLLQSKAIQKIFLLQMELGSHLKNKNVYSMAYASMKLRSINLAMNGVARNVHAMIQHTAVVNSLPNGRAFQFAFSKQDLIYSLIPSVNWFVSFVTFLTQQLIMLVNNPMDNTHSLVLGILSCITTRHLMLKVILELKNMIGLITKFPETTYTVLNESSRFLRKALGDSPVNLEKFEVFLNEINNKFLSLLDDHGAQSMDREPSFMVKAEIPPALGHVREFLLSFAGSALLAQTNLAEVFFASTHNLRIFDHQHFHPSVANLLQPPEKGLVVDDAILPDACRGSSSFSPLDYDDISSEWVDMSALVRIKRCVRCGCVTRAGNPVAKNNTILETSIVTKRWTALYSRYCQCTGLLYELDTP.

Belongs to the Mediator complex subunit 16 family. As to quaternary structure, component of the Mediator complex.

Its subcellular location is the nucleus. Functionally, component of the Mediator complex, a coactivator involved in the regulated transcription of nearly all RNA polymerase II-dependent genes. Mediator functions as a bridge to convey information from gene-specific regulatory proteins to the basal RNA polymerase II transcription machinery. Mediator is recruited to promoters by direct interactions with regulatory proteins and serves as a scaffold for the assembly of a functional preinitiation complex with RNA polymerase II and the general transcription factors. The protein is Mediator of RNA polymerase II transcription subunit 16 (SIN4) of Eremothecium gossypii (strain ATCC 10895 / CBS 109.51 / FGSC 9923 / NRRL Y-1056) (Yeast).